A 326-amino-acid polypeptide reads, in one-letter code: Fructokinase (326 aa).

Residues 275–326 form a disordered region; it reads EQALRNGPDPRRQSRRRHRLPRRRQSTLGARDWSLRLEQDSDPHPPDDTFSP. Residues 287–299 are compositionally biased toward basic residues; that stretch reads QSRRRHRLPRRRQ. The segment covering 307-326 has biased composition (basic and acidic residues); the sequence is WSLRLEQDSDPHPPDDTFSP.

This sequence belongs to the carbohydrate kinase PfkB family.

It catalyses the reaction D-fructose + ATP = D-fructose 6-phosphate + ADP + H(+). The chain is Fructokinase (frk) from Rhizobium leguminosarum bv. trifolii.